The primary structure comprises 349 residues: Protein FAM98C (349 aa).

The tract at residues 313–349 is disordered; it reads PDRGGRPNELEPPMPTWRSRREDGGPQCWGRKKKKKK.

This sequence belongs to the FAM98 family.

This Homo sapiens (Human) protein is Protein FAM98C (FAM98C).